Consider the following 790-residue polypeptide: Kinesin-like protein KIF9 (790 aa).

One can recognise a Kinesin motor domain in the interval 6-340 (KVQAFVRVRP…LRFASRMKLV (335 aa)). ATP-binding positions include 12–14 (RVR) and 93–100 (GQTGAGKT). Residues 342-442 (TEPAINEKYD…EQEVESALRR (101 aa)) are a coiled coil. The interval 482-521 (GVAPFSVKPGKKPKTKKTPKDQFSSSARKEGASSPVSGKD) is disordered. At Thr-530 the chain carries Phosphothreonine. Residues 547-577 (RERETSSIEPLISDSPKEELRAPRPSTPPSR) are disordered. The stretch at 600-695 (KSILNERKKR…YCQRLVDQCR (96 aa)) forms a coiled coil.

Belongs to the TRAFAC class myosin-kinesin ATPase superfamily. Kinesin family. As to quaternary structure, interacts with HYDIN. In terms of tissue distribution, highly expressed in the testis (at protein level). Weakly expressed in the brain, thymus, lung and heart.

The protein localises to the cytoplasm. Its subcellular location is the cytoskeleton. It localises to the cell projection. It is found in the cilium. The protein resides in the flagellum. The protein localises to the flagellum axoneme. Its function is as follows. Essential for normal male fertility and for progressive motility of spermatozoa. In Mus musculus (Mouse), this protein is Kinesin-like protein KIF9 (Kif9).